The sequence spans 307 residues: Ribosomal protein L11 methyltransferase (307 aa).

S-adenosyl-L-methionine-binding residues include threonine 162, glycine 183, aspartate 205, and asparagine 244.

This sequence belongs to the methyltransferase superfamily. PrmA family.

The protein localises to the cytoplasm. The catalysed reaction is L-lysyl-[protein] + 3 S-adenosyl-L-methionine = N(6),N(6),N(6)-trimethyl-L-lysyl-[protein] + 3 S-adenosyl-L-homocysteine + 3 H(+). In terms of biological role, methylates ribosomal protein L11. In Bordetella parapertussis (strain 12822 / ATCC BAA-587 / NCTC 13253), this protein is Ribosomal protein L11 methyltransferase.